Here is a 446-residue protein sequence, read N- to C-terminus: Methionine aminopeptidase 2 (446 aa).

The interval 1-85 is disordered; the sequence is MAGVTEGEDT…KNKKKKKKKI (85 aa). Residues 8 to 32 are compositionally biased toward basic and acidic residues; sequence EDTKVIESKINELNIDKPKLEDNNE. The segment covering 42 to 58 has biased composition (acidic residues); the sequence is SGDDDDDDKEEDDDNEI. Over residues 73-85 the composition is skewed to basic residues; sequence KKNKNKKKKKKKI. H197 is a binding site for substrate. Residues D217, D228, and H299 each contribute to the a divalent metal cation site. Position 307 (H307) interacts with substrate. A divalent metal cation-binding residues include E332 and E427.

It belongs to the peptidase M24A family. Methionine aminopeptidase eukaryotic type 2 subfamily. Co(2+) is required as a cofactor. Requires Zn(2+) as cofactor. The cofactor is Mn(2+). It depends on Fe(2+) as a cofactor.

The protein localises to the cytoplasm. It catalyses the reaction Release of N-terminal amino acids, preferentially methionine, from peptides and arylamides.. In terms of biological role, cotranslationally removes the N-terminal methionine from nascent proteins. The N-terminal methionine is often cleaved when the second residue in the primary sequence is small and uncharged (Met-Ala-, Cys, Gly, Pro, Ser, Thr, or Val). The protein is Methionine aminopeptidase 2 of Candida albicans (strain SC5314 / ATCC MYA-2876) (Yeast).